The sequence spans 519 residues: MTAESGDQIPTVHVATSLPKRGVSSSVLIVPVVSTGDDEQSGERPGAVVASAEPFLSADAIAEIEAGLRALDATGASDQVHRLVVSSLPVSSVLTVGLGKPRYEWTPDAVRRAAGAAARALGTAKTVVTTLADLPGDGVCAAAIEGLILGSYRFSAFRSAKTAPKDAGLHKVTVLTTAKDARKHCAHGAAVATAVATARDLVNTPPSHLYPAELARRAKVLGESVGLEVQVLDEKALQKAGYGGLVGVGQGSSRPPRLVRLTHRGSRLAKNPRRAKKVALVGKGVTFDTGGISIKPAASMHYMTSDMGGAAAVIATVALAAQLELPIDVIATVPIAENMPSATAQRPGDVLTQYGGTTVEVLNTDAEGRLILADAIVRACEDNPDYLIETSTLTGAQTVALGARIPGVMGSDEFRDRVAAISQQVGENGWPMPLPDELKDDLKSTVADLANVSGQRFAGMLVAGVFLREFVADAVDWAHIDVAGPAYNTGSAWGYTPKGATGVPTRTMFAVLEDIAANG.

Lys283 and Asp288 together coordinate Mn(2+). Lys295 is an active-site residue. The Mn(2+) site is built by Asp306, Asp365, and Glu367. Residue Arg369 is part of the active site.

This sequence belongs to the peptidase M17 family. The cofactor is Mn(2+).

It localises to the cytoplasm. The catalysed reaction is Release of an N-terminal amino acid, Xaa-|-Yaa-, in which Xaa is preferably Leu, but may be other amino acids including Pro although not Arg or Lys, and Yaa may be Pro. Amino acid amides and methyl esters are also readily hydrolyzed, but rates on arylamides are exceedingly low.. It catalyses the reaction Release of an N-terminal amino acid, preferentially leucine, but not glutamic or aspartic acids.. Its function is as follows. Presumably involved in the processing and regular turnover of intracellular proteins. Catalyzes the removal of unsubstituted N-terminal amino acids from various peptides. In Mycobacterium marinum (strain ATCC BAA-535 / M), this protein is Probable cytosol aminopeptidase.